Reading from the N-terminus, the 462-residue chain is Argininosuccinate lyase (462 aa).

This sequence belongs to the lyase 1 family. Argininosuccinate lyase subfamily.

Its subcellular location is the cytoplasm. It carries out the reaction 2-(N(omega)-L-arginino)succinate = fumarate + L-arginine. The protein operates within amino-acid biosynthesis; L-arginine biosynthesis; L-arginine from L-ornithine and carbamoyl phosphate: step 3/3. This chain is Argininosuccinate lyase, found in Bacillus cereus (strain B4264).